Reading from the N-terminus, the 234-residue chain is Probable glycerol uptake facilitator protein (234 aa).

2 consecutive transmembrane segments (helical) span residues 3-23 and 36-56; these read VYLA…GVVA and GWIV…YLVG. An NPA 1 motif is present at residues 64–66; that stretch reads NPA. A run of 3 helical transmembrane segments spans residues 82-102, 134-154, and 164-184; these read VPGY…LVYL, LLTE…IGAN, and LVGF…GYAI. The short motif at 185–187 is the NPA 2 element; that stretch reads NPA. Residues 214-234 form a helical membrane-spanning segment; that stretch reads VPIIGPIIGGILGASLYNWLF.

It belongs to the MIP/aquaporin (TC 1.A.8) family.

It is found in the cell membrane. It carries out the reaction glycerol(in) = glycerol(out). Mediates glycerol diffusion across the cytoplasmic membrane via a pore-type mechanism. This chain is Probable glycerol uptake facilitator protein (glpF), found in Thermotoga maritima (strain ATCC 43589 / DSM 3109 / JCM 10099 / NBRC 100826 / MSB8).